A 271-amino-acid polypeptide reads, in one-letter code: Phosphatidylinositol transfer protein beta isoform (271 aa).

Residue Lys215 is modified to N6-acetyllysine. Ser262 carries the phosphoserine; by PKC modification.

Belongs to the PtdIns transfer protein family. PI transfer class I subfamily. Constitutive phosphorylation of Ser-262 has no effect on phospholipid transfer activity but is required for Golgi targeting.

The protein resides in the golgi apparatus. It is found in the golgi apparatus membrane. The protein localises to the endoplasmic reticulum membrane. It catalyses the reaction a 1,2-diacyl-sn-glycero-3-phosphocholine(in) = a 1,2-diacyl-sn-glycero-3-phosphocholine(out). The enzyme catalyses a 1,2-diacyl-sn-glycero-3-phospho-(1D-myo-inositol)(in) = a 1,2-diacyl-sn-glycero-3-phospho-(1D-myo-inositol)(out). It carries out the reaction an N-(acyl)-sphingosylphosphocholine(in) = an N-(acyl)-sphingosylphosphocholine(out). Catalyzes the transfer of phosphatidylinositol, phosphatidylcholine and sphingomyelin between membranes. Required for COPI-mediated retrograde transport from the Golgi to the endoplasmic reticulum; phosphatidylinositol and phosphatidylcholine transfer activity is essential for this function. The protein is Phosphatidylinositol transfer protein beta isoform (Pitpnb) of Mus musculus (Mouse).